The following is a 592-amino-acid chain: BRCA1-associated protein (592 aa).

Ser52 is modified (phosphoserine). The tract at residues 78–124 (KSNPDELKTTVEERKSSEASPTAQRSKDHSKECINAAPDSPSKQLPD) is disordered. A compositionally biased stretch (basic and acidic residues) spans 80–94 (NPDELKTTVEERKSS). Phosphoserine is present on residues Ser97, Ser117, and Ser119. The RING-type zinc finger occupies 264–304 (CTVCLERMDESVNGILTTLCNHSFHSQCLQRWDDTTCPVCR). A UBP-type; degenerate zinc finger spans residues 301-393 (PVCRYCQTPE…GKIVQYECEG (93 aa)). Zn(2+) is bound by residues Cys317, Cys320, Cys329, Cys332, Cys337, His344, His348, and His354. Residues 429–537 (RIEKDTAEEI…EIQEQLRDVM (109 aa)) are a coiled coil. Residues 565–592 (AMASASSPASSGGSGKLPSRKGRSKRGK) form a disordered region. A compositionally biased stretch (basic residues) spans 582 to 592 (PSRKGRSKRGK).

As to quaternary structure, interacts with the nuclear localization signal of BRCA1 and with the N-terminal of KSR1. The C-terminal portion of BCRA1 interacts with DDB1. In terms of tissue distribution, expressed in breast epithelial cell lines.

The protein localises to the cytoplasm. It catalyses the reaction S-ubiquitinyl-[E2 ubiquitin-conjugating enzyme]-L-cysteine + [acceptor protein]-L-lysine = [E2 ubiquitin-conjugating enzyme]-L-cysteine + N(6)-ubiquitinyl-[acceptor protein]-L-lysine.. The protein operates within protein modification; protein ubiquitination. In terms of biological role, negatively regulates MAP kinase activation by limiting the formation of Raf/MEK complexes probably by inactivation of the KSR1 scaffold protein. Also acts as a Ras responsive E3 ubiquitin ligase that, on activation of Ras, is modified by auto-polyubiquitination resulting in the release of inhibition of Raf/MEK complex formation. May also act as a cytoplasmic retention protein with a role in regulating nuclear transport. In Homo sapiens (Human), this protein is BRCA1-associated protein.